The chain runs to 297 residues: Halorhodopsin (297 aa).

Residues 1 to 31 (MRSRTYHDQSVCGPYGSQRTDCDRDTDAGSD) form a disordered region. Residues 1-45 (MRSRTYHDQSVCGPYGSQRTDCDRDTDAGSDTDVHGAQVATQIRT) lie on the Extracellular side of the membrane. Residues 46-71 (DTLLHSSLWVNIALAGLSILVFLYMA) traverse the membrane as a helical segment. Over 72–77 (RTVRAN) the chain is Cytoplasmic. A helical transmembrane segment spans residues 78–101 (RARLIVGATLMIPLVSLSSYLGLV). At 102-125 (TGLTAGPIEMPAAHALAGEDVLSQ) the chain is on the extracellular side. The chain crosses the membrane as a helical span at residues 126–147 (WGRYLTWTLSTPMILLALGWLA). Topologically, residues 148 to 150 (EVD) are cytoplasmic. Residues 151–174 (TADLFVVIAADIGMCLTGLAAALT) traverse the membrane as a helical segment. At 175 to 177 (TSS) the chain is on the extracellular side. The helical transmembrane segment at 178–200 (YAFRWAFYLVSTAFFVVVLYALL) threads the bilayer. The Cytoplasmic portion of the chain corresponds to 201–212 (AKWPTNAEAAGT). A helical transmembrane segment spans residues 213 to 236 (GDIFGTLRWLTVILWLGYPILWAL). The Extracellular portion of the chain corresponds to 237–246 (GVEGFALVDS). Residues 247-275 (VGLTSWGYSLLDIGAKYLFAALLLRWVAN) form a helical membrane-spanning segment. Position 262 is an N6-(retinylidene)lysine (Lys262). The Cytoplasmic portion of the chain corresponds to 276–297 (NERTIAVGQRSGRGAIGDPVED).

Belongs to the archaeal/bacterial/fungal opsin family.

The protein resides in the cell membrane. Light-driven chloride pump. This is Halorhodopsin (hop) from Haloterrigena sp. (strain arg-4).